The following is a 310-amino-acid chain: Cysteine synthase (310 aa).

Lysine 46 carries the post-translational modification N6-(pyridoxal phosphate)lysine. Residues asparagine 76, 180–184 (GTGGT), and serine 268 contribute to the pyridoxal 5'-phosphate site.

It belongs to the cysteine synthase/cystathionine beta-synthase family. As to quaternary structure, homodimer. Pyridoxal 5'-phosphate is required as a cofactor.

It catalyses the reaction O-acetyl-L-serine + hydrogen sulfide = L-cysteine + acetate. The protein operates within amino-acid biosynthesis; L-cysteine biosynthesis; L-cysteine from L-serine: step 2/2. The protein is Cysteine synthase (cysK) of Staphylococcus epidermidis (strain ATCC 35984 / DSM 28319 / BCRC 17069 / CCUG 31568 / BM 3577 / RP62A).